A 534-amino-acid chain; its full sequence is Potential RNA-dependent RNA polymerase (534 aa).

One can recognise a RdRp catalytic domain in the interval Asp-255–Val-373.

It localises to the virion. It carries out the reaction RNA(n) + a ribonucleoside 5'-triphosphate = RNA(n+1) + diphosphate. In terms of biological role, RNA-directed RNA polymerase that is involved in both transcription and genome replication. In Human picobirnavirus (strain Human/Thailand/Hy005102/-) (PBV), this protein is Potential RNA-dependent RNA polymerase (Segment-2).